Here is a 682-residue protein sequence, read N- to C-terminus: Acetyl-coenzyme A synthetase 2-like, mitochondrial (682 aa).

Residues 1–38 (MAARSLGSGVGRLLRGLQGRSGQSGWSLSVSRSTATRL) constitute a mitochondrion transit peptide. Residues 217-220 (RGGR) and threonine 334 each bind CoA. Position 389 is an N6-acetyllysine (lysine 389). ATP is bound by residues 410-412 (GEP), 434-439 (DTWWQT), aspartate 526, and arginine 541. Residue serine 549 coordinates CoA. Arginine 552 is a binding site for ATP. Lysine 635 is modified (N6-acetyllysine).

This sequence belongs to the ATP-dependent AMP-binding enzyme family. Interacts with SIRT3. In terms of processing, reversibly acetylated at Lys-635. The acetyl-CoA synthase activity is inhibited by acetylation and activated by deacetylation mediated by the deacetylase SIRT3. As to expression, highly expressed in heart, testis, kidney, skeletal muscle, lung and spleen. Detected at low levels in brain.

The protein localises to the mitochondrion matrix. It carries out the reaction acetate + ATP + CoA = acetyl-CoA + AMP + diphosphate. It catalyses the reaction propanoate + ATP + CoA = propanoyl-CoA + AMP + diphosphate. Its activity is regulated as follows. Inhibited by acetylation at Lys-635 and activated by deacetylation mediated by the deacetylase SIRT3. Its function is as follows. Catalyzes the synthesis of acetyl-CoA from short-chain fatty acids. Acetate is the preferred substrate. Can also utilize propionate with a much lower affinity. Provides acetyl-CoA that is utilized mainly for oxidation under ketogenic conditions. Involved in thermogenesis under ketogenic conditions, using acetate as a vital fuel when carbohydrate availability is insufficient. This Mus musculus (Mouse) protein is Acetyl-coenzyme A synthetase 2-like, mitochondrial (Acss1).